Consider the following 865-residue polypeptide: Protein translocase subunit SecA (865 aa).

Residues glutamine 85, 103–107 (GEGKT), and aspartate 505 each bind ATP. Cysteine 847, cysteine 849, cysteine 858, and histidine 859 together coordinate Zn(2+).

Belongs to the SecA family. Monomer and homodimer. Part of the essential Sec protein translocation apparatus which comprises SecA, SecYEG and auxiliary proteins SecDF. Other proteins may also be involved. Requires Zn(2+) as cofactor.

It is found in the cell membrane. The protein localises to the cytoplasm. It catalyses the reaction ATP + H2O + cellular proteinSide 1 = ADP + phosphate + cellular proteinSide 2.. Its function is as follows. Part of the Sec protein translocase complex. Interacts with the SecYEG preprotein conducting channel. Has a central role in coupling the hydrolysis of ATP to the transfer of proteins into and across the cell membrane, serving as an ATP-driven molecular motor driving the stepwise translocation of polypeptide chains across the membrane. This is Protein translocase subunit SecA from Lactococcus lactis subsp. cremoris (strain MG1363).